A 510-amino-acid polypeptide reads, in one-letter code: Maturase K (510 aa).

This sequence belongs to the intron maturase 2 family. MatK subfamily.

The protein localises to the plastid. It is found in the chloroplast. Functionally, usually encoded in the trnK tRNA gene intron. Probably assists in splicing its own and other chloroplast group II introns. This chain is Maturase K, found in Gratiola officinalis (Hedgehyssop).